We begin with the raw amino-acid sequence, 114 residues long: Large ribosomal subunit protein bL19 (114 aa).

This sequence belongs to the bacterial ribosomal protein bL19 family.

This protein is located at the 30S-50S ribosomal subunit interface and may play a role in the structure and function of the aminoacyl-tRNA binding site. This is Large ribosomal subunit protein bL19 from Acetivibrio thermocellus (strain ATCC 27405 / DSM 1237 / JCM 9322 / NBRC 103400 / NCIMB 10682 / NRRL B-4536 / VPI 7372) (Clostridium thermocellum).